The primary structure comprises 207 residues: MEDLLYSFVVTDITSALVFVRRQTDALVYASLGLNKKQLLKGARTAFNQLSKKSAIHYNFKQIEVESEQEHVEKFQDTVNKFTKLLEGHIVKDLHYEYMFGTSLQHRIWDELVKIPHGKVTTYKEIADKLKIKNGSRAIGSGIGSNNIAIVIPCHRVVCSNGTLSGYKWSTSLKRKLLEREHVYASNKKDALNKDTKISLMKYKYSA.

The DNA site is built by Tyr-123 and Arg-137. Cys-154 acts as the Nucleophile; methyl group acceptor in catalysis. Ser-160 contributes to the DNA binding site.

It belongs to the MGMT family.

Its subcellular location is the nucleus. It catalyses the reaction a 6-O-methyl-2'-deoxyguanosine in DNA + L-cysteinyl-[protein] = S-methyl-L-cysteinyl-[protein] + a 2'-deoxyguanosine in DNA. The enzyme catalyses a 4-O-methyl-thymidine in DNA + L-cysteinyl-[protein] = a thymidine in DNA + S-methyl-L-cysteinyl-[protein]. Functionally, involved in the cellular defense against the biological effects of O6-methylguanine (O6-MeG) and O4-methylthymine (O4-MeT) in DNA. Repairs the methylated nucleobase in DNA by stoichiometrically transferring the methyl group to a cysteine residue in the enzyme. This is a suicide reaction: the enzyme is irreversibly inactivated. The polypeptide is Methylated-DNA--protein-cysteine methyltransferase (MGT1) (Candida glabrata (strain ATCC 2001 / BCRC 20586 / JCM 3761 / NBRC 0622 / NRRL Y-65 / CBS 138) (Yeast)).